A 721-amino-acid polypeptide reads, in one-letter code: Solute carrier family 12 member 8 (721 aa).

The next 11 membrane-spanning stretches (helical) occupy residues 53-73 (FGTW…VVLF), 84-104 (GVLL…VTVL), 115-135 (IGSG…VGGT), 136-156 (IGVL…TGFA), 174-194 (ISLA…KWII), 196-216 (LQLL…IGSF), 247-267 (FFTV…GFNM), 283-303 (LAAI…LGAI), 321-341 (LVGG…CMGG), 374-394 (PVAA…IGQV), and 397-417 (LAPI…YSYF). 2 disordered regions span residues 473-505 (PNHT…KQTL) and 533-580 (NESQ…STVA). The span at 553 to 565 (TESDEPDSEEDVD) shows a compositional bias: acidic residues. Transmembrane regions (helical) follow at residues 606 to 626 (FLGA…YALV) and 628 to 648 (LGVA…LNPG).

Belongs to the SLC12A transporter family.

The protein resides in the membrane. Functionally, cation/chloride cotransporter. This is Solute carrier family 12 member 8 (slc12a8) from Xenopus laevis (African clawed frog).